The following is a 204-amino-acid chain: Distal tail protein pb9 (204 aa).

As to quaternary structure, homohexamer. Interacts with baseplate tube protein p140 and baseplate hub protein pb3.

It localises to the virion. Functionally, forms the simplified baseplate, together with the p132 collar protein, the baseplate tube protein p140 and baseplate hub protein pb3. The chain is Distal tail protein pb9 (D16) from Escherichia phage T5 (Enterobacteria phage T5).